The sequence spans 72 residues: Large ribosomal subunit protein bL28 (72 aa).

This sequence belongs to the bacterial ribosomal protein bL28 family.

This is Large ribosomal subunit protein bL28 from Chlorobium phaeobacteroides (strain DSM 266 / SMG 266 / 2430).